Here is a 451-residue protein sequence, read N- to C-terminus: Prenyltransferase anuH (451 aa).

Positions 105, 189, 191, 257, 259, and 422 each coordinate dimethylallyl diphosphate.

The protein belongs to the tryptophan dimethylallyltransferase family.

It catalyses the reaction (8S)-annullatin E + dimethylallyl diphosphate = (8S)-annullatin J + diphosphate. It participates in secondary metabolite biosynthesis. Cytochrome P450 monooxygenase; part of the gene cluster that mediates the biosynthesis of annullatin D, an alkylated aromatic polyketide with a fused dihydrobenzofuran lactone ring system that exhibits potent agonistic activities toward the cannabinoid receptors. Within the pathway, anuH uses dimethylallyl diphosphate (DMAPP) to prenylate (8S)-annullatin E to produce (8S)-annullatin J. Geranyl and farnesyl diphosphate are not consumed by anuH for prenylation. 2-hydroxymethyl-3-pentylphenol, without the hydroxyl group at the side chain, is also accepted by anuH, but only with low conversion yield. The annullatin backbone 2-hydroxymethyl-3-pentylphenol is assembled from one acetyl-CoA starter unit and 5 malonyl-CoA elongation units by cooperation of the highly reducing polyketide synthase anuA, the short-chain dehydrogenase anuB and the oxidoreductase anuC, before being hydroxylated at the C-5 alkyl chain by the cytochrome P450 monooxygenase anuE to form (8S)-annullatin E. The prenyltransferase anuH subsequently installs one isoprenyl group at the benzene ring to form (8S)-annullatin J. Enzymatic or nonenzymatic dihydro-benzofuran ring formation between the prenyl and the phenolic hydroxyl groups in (8S)-annullatin J results in two diastereomers (2S,9S)-annullatin H and compound 12. The intermediate (2S,9S)-annullatin H is then converted to (2S,9S)-annullatin D by the FAD-linked oxidoreductase anuG-catalyzed five-member lactone ring formation. The isomer 12 acts as a substrate for the short-chain dehydrogenase anuF and is oxidized to (2R)-annullatin F, which is subsequently acetylated by an acetyltransferase leading to (2R)-annullatin G formation. The remaining enzymes identified within the cluster, anuD, anuI and anuJ, seem not to be involved in annullatin biosynthesis. The polypeptide is Prenyltransferase anuH (Penicillium roqueforti (strain FM164)).